The chain runs to 512 residues: Cytochrome P450 1A2 (512 aa).

A glycan (O-linked (GlcNAc) serine) is linked at S65. F222 lines the substrate pocket. Heme is bound at residue C454.

It belongs to the cytochrome P450 family. As to quaternary structure, interacts with PGRMC1; the interaction requires PGRMC1 homodimerization. Heme is required as a cofactor. In terms of tissue distribution, constitutively expressed in liver.

It localises to the endoplasmic reticulum membrane. Its subcellular location is the microsome membrane. The catalysed reaction is an organic molecule + reduced [NADPH--hemoprotein reductase] + O2 = an alcohol + oxidized [NADPH--hemoprotein reductase] + H2O + H(+). The enzyme catalyses 17beta-estradiol + reduced [NADPH--hemoprotein reductase] + O2 = 2-hydroxy-17beta-estradiol + oxidized [NADPH--hemoprotein reductase] + H2O + H(+). It carries out the reaction 17beta-estradiol + reduced [NADPH--hemoprotein reductase] + O2 = 4-hydroxy-17beta-estradiol + oxidized [NADPH--hemoprotein reductase] + H2O + H(+). It catalyses the reaction estrone + reduced [NADPH--hemoprotein reductase] + O2 = 2-hydroxyestrone + oxidized [NADPH--hemoprotein reductase] + H2O + H(+). The catalysed reaction is estrone + reduced [NADPH--hemoprotein reductase] + O2 = 4-hydroxyestrone + oxidized [NADPH--hemoprotein reductase] + H2O + H(+). The enzyme catalyses cholesterol + reduced [NADPH--hemoprotein reductase] + O2 = 25-hydroxycholesterol + oxidized [NADPH--hemoprotein reductase] + H2O + H(+). It carries out the reaction all-trans-retinol + reduced [NADPH--hemoprotein reductase] + O2 = all-trans-retinal + oxidized [NADPH--hemoprotein reductase] + 2 H2O + H(+). It catalyses the reaction all-trans-retinal + reduced [NADPH--hemoprotein reductase] + O2 = all-trans-retinoate + oxidized [NADPH--hemoprotein reductase] + H2O + 2 H(+). The catalysed reaction is (5Z,8Z,11Z,14Z)-eicosatetraenoate + reduced [NADPH--hemoprotein reductase] + O2 = (14R,15S)-epoxy-(5Z,8Z,11Z)-eicosatrienoate + oxidized [NADPH--hemoprotein reductase] + H2O + H(+). The enzyme catalyses (5Z,8Z,11Z,14Z)-eicosatetraenoate + reduced [NADPH--hemoprotein reductase] + O2 = (14S,15R)-epoxy-(5Z,8Z,11Z)-eicosatrienoate + oxidized [NADPH--hemoprotein reductase] + H2O + H(+). It carries out the reaction (5Z,8Z,11Z,14Z,17Z)-eicosapentaenoate + reduced [NADPH--hemoprotein reductase] + O2 = (17R,18S)-epoxy-(5Z,8Z,11Z,14Z)-eicosatetraenoate + oxidized [NADPH--hemoprotein reductase] + H2O + H(+). It catalyses the reaction (4Z,7Z,10Z,13Z,16Z,19Z)-docosahexaenoate + reduced [NADPH--hemoprotein reductase] + O2 = (19R,20S)-epoxy-(4Z,7Z,10Z,13Z,16Z)-docosapentaenoate + oxidized [NADPH--hemoprotein reductase] + H2O + H(+). The catalysed reaction is (5S)-hydroperoxy-(6E,8Z,11Z,14Z)-eicosatetraenoate = 5-oxo-(6E,8Z,11Z,14Z)-eicosatetraenoate + H2O. The enzyme catalyses (12S)-hydroperoxy-(5Z,8Z,10E,14Z)-eicosatetraenoate = 12-oxo-(5Z,8Z,10E,14Z)-eicosatetraenoate + H2O. It carries out the reaction (15S)-hydroperoxy-(5Z,8Z,11Z,13E)-eicosatetraenoate = 15-oxo-(5Z,8Z,11Z,13E)-eicosatetraenoate + H2O. It catalyses the reaction (13S)-hydroperoxy-(9Z,11E)-octadecadienoate = 13-oxo-(9Z,11E)-octadecadienoate + H2O. The catalysed reaction is (5Z,8Z,11Z,14Z)-eicosatetraenoate + reduced [NADPH--hemoprotein reductase] + O2 = 13-hydroxy-(5Z,8Z,11Z,14Z)-eicosatetraenoate + oxidized [NADPH--hemoprotein reductase] + H2O + H(+). The enzyme catalyses (5Z,8Z,11Z,14Z)-eicosatetraenoate + reduced [NADPH--hemoprotein reductase] + O2 = 19-hydroxy-(5Z,8Z,11Z,14Z)-eicosatetraenoate + oxidized [NADPH--hemoprotein reductase] + H2O + H(+). It carries out the reaction (9Z,12Z)-octadecadienoate + reduced [NADPH--hemoprotein reductase] + O2 = 11-hydroxy-(9Z,12Z)-octadecadienoate + oxidized [NADPH--hemoprotein reductase] + H2O + H(+). It participates in cofactor metabolism; retinol metabolism. The protein operates within steroid metabolism; cholesterol metabolism. Its pathway is lipid metabolism; arachidonate metabolism. A cytochrome P450 monooxygenase involved in the metabolism of various endogenous substrates, including fatty acids, steroid hormones and vitamins. Mechanistically, uses molecular oxygen inserting one oxygen atom into a substrate, and reducing the second into a water molecule, with two electrons provided by NADPH via cytochrome P450 reductase (NADPH--hemoprotein reductase). Catalyzes the hydroxylation of carbon-hydrogen bonds. Exhibits high catalytic activity for the formation of hydroxyestrogens from estrone (E1) and 17beta-estradiol (E2), namely 2-hydroxy E1 and E2. Metabolizes cholesterol toward 25-hydroxycholesterol, a physiological regulator of cellular cholesterol homeostasis. May act as a major enzyme for all-trans retinoic acid biosynthesis in the liver. Catalyzes two successive oxidative transformation of all-trans retinol to all-trans retinal and then to the active form all-trans retinoic acid. Primarily catalyzes stereoselective epoxidation of the last double bond of polyunsaturated fatty acids (PUFA), displaying a strong preference for the (R,S) stereoisomer. Catalyzes bisallylic hydroxylation and omega-1 hydroxylation of PUFA. May also participate in eicosanoids metabolism by converting hydroperoxide species into oxo metabolites (lipoxygenase-like reaction, NADPH-independent). Plays a role in the oxidative metabolism of xenobiotics. Catalyzes the N-hydroxylation of heterocyclic amines and the O-deethylation of phenacetin. Metabolizes caffeine via N3-demethylation. This Canis lupus familiaris (Dog) protein is Cytochrome P450 1A2 (CYP1A2).